We begin with the raw amino-acid sequence, 448 residues long: Adenylosuccinate synthetase (448 aa).

GTP is bound by residues 22–28 and 50–52; these read GDEGKGK and GHT. Residue Asp-23 is the Proton acceptor of the active site. Mg(2+) contacts are provided by Asp-23 and Gly-50. IMP contacts are provided by residues 23 to 26, 48 to 51, Thr-139, Arg-153, Gln-234, Thr-249, and Arg-321; these read DEGK and NAGH. The active-site Proton donor is His-51. Position 317 to 323 (317 to 323) interacts with substrate; sequence SVTGRPR. GTP is bound by residues Arg-323, 349–351, and 431–433; these read KLD and STG.

This sequence belongs to the adenylosuccinate synthetase family. In terms of assembly, homodimer. Requires Mg(2+) as cofactor.

Its subcellular location is the cytoplasm. It carries out the reaction IMP + L-aspartate + GTP = N(6)-(1,2-dicarboxyethyl)-AMP + GDP + phosphate + 2 H(+). It functions in the pathway purine metabolism; AMP biosynthesis via de novo pathway; AMP from IMP: step 1/2. Its function is as follows. Plays an important role in the de novo pathway of purine nucleotide biosynthesis. Catalyzes the first committed step in the biosynthesis of AMP from IMP. This chain is Adenylosuccinate synthetase, found in Paraburkholderia xenovorans (strain LB400).